The chain runs to 207 residues: ATP-dependent Clp protease proteolytic subunit 2 (207 aa).

S102 acts as the Nucleophile in catalysis. H127 is a catalytic residue.

Belongs to the peptidase S14 family. In terms of assembly, fourteen ClpP subunits assemble into 2 heptameric rings which stack back to back to give a disk-like structure with a central cavity, resembling the structure of eukaryotic proteasomes.

The protein localises to the cytoplasm. It catalyses the reaction Hydrolysis of proteins to small peptides in the presence of ATP and magnesium. alpha-casein is the usual test substrate. In the absence of ATP, only oligopeptides shorter than five residues are hydrolyzed (such as succinyl-Leu-Tyr-|-NHMec, and Leu-Tyr-Leu-|-Tyr-Trp, in which cleavage of the -Tyr-|-Leu- and -Tyr-|-Trp bonds also occurs).. Its function is as follows. Cleaves peptides in various proteins in a process that requires ATP hydrolysis. Has a chymotrypsin-like activity. Plays a major role in the degradation of misfolded proteins. In Bifidobacterium longum (strain NCC 2705), this protein is ATP-dependent Clp protease proteolytic subunit 2.